Consider the following 116-residue polypeptide: Large ribosomal subunit protein bL17 (116 aa).

It belongs to the bacterial ribosomal protein bL17 family. In terms of assembly, part of the 50S ribosomal subunit. Contacts protein L32.

The chain is Large ribosomal subunit protein bL17 from Sulfurovum sp. (strain NBC37-1).